Consider the following 262-residue polypeptide: MTSAPTVSVITISFNDLDGLQRTVKSVRAQRYRGRIEHIVIDGGSGDDVVAYLSGCEPGFAYWQSEPDGGRYDAMNQGIAHASGDLLWFLHSADRFSGPDVVAQAVEALSGKGPVSELWGFGMDRLVGLDRVRGPIPFSLRKFLAGKQVVPHQASFFGSSLVAKIGGYDLDFGIAADQEFILRAALVCEPVTIRCVLCEFDTTGVGSHREPSAVFGDLRRMGDLHRRYPFGGRRISHAYLRGREFYAYNSRFWENVFTRMSK.

Belongs to the glycosyltransferase 2 family.

This is an uncharacterized protein from Mycobacterium tuberculosis (strain CDC 1551 / Oshkosh).